Here is a 560-residue protein sequence, read N- to C-terminus: Serine/threonine-protein kinase TOS3 (560 aa).

The Protein kinase domain maps to 50–344 (FEILATLGNG…LADIKVHPFM (295 aa)). Residues 56–64 (LGNGQYGKV) and Lys79 contribute to the ATP site. The active-site Proton acceptor is the Asp189.

Belongs to the protein kinase superfamily. Ser/Thr protein kinase family. Autophosphorylated.

The enzyme catalyses L-seryl-[protein] + ATP = O-phospho-L-seryl-[protein] + ADP + H(+). It carries out the reaction L-threonyl-[protein] + ATP = O-phospho-L-threonyl-[protein] + ADP + H(+). One of the three SNF1 protein kinases (with SAK1 and ELM1) which are required for growth on nonfermentable carbon sources and nonpreferred sugars and for response to environmental stress. Activates SNF1 by phosphorylation of its activation-loop 'Thr-210'. Required for the regulation by SNF1 of the transcription of a large set of genes, the modification the activity of metabolic enzymes, and the control of various nutrient-responsive cellular developmental processes. Also phosphorylates GAL83, MIG1 and SIP2. This Saccharomyces cerevisiae (strain YJM789) (Baker's yeast) protein is Serine/threonine-protein kinase TOS3 (TOS3).